Here is a 250-residue protein sequence, read N- to C-terminus: Nuclear transcription factor Y subunit C-4 (250 aa).

Residues 1–10 (MDNNNNNNNQ) are compositionally biased toward low complexity. Disordered stretches follow at residues 1 to 35 (MDNN…PSGS) and 209 to 250 (GVYA…DSQG). Residues 214 to 225 (PPSQAWQSVWQN) show a composition bias toward polar residues. Residues 227–242 (AGGGDDVSYGSGGSSG) are compositionally biased toward gly residues.

This sequence belongs to the NFYC/HAP5 subunit family. Heterotrimeric transcription factor composed of three components, NF-YA, NF-YB and NF-YC. NF-YB and NF-YC must interact and dimerize for NF-YA association and DNA binding. In terms of tissue distribution, ubiquitous. Present in etiolated seedlings.

The protein localises to the nucleus. Stimulates the transcription of various genes by recognizing and binding to a CCAAT motif in promoters. Involved in the abscisic acid (ABA) signaling pathway. The chain is Nuclear transcription factor Y subunit C-4 (NFYC4) from Arabidopsis thaliana (Mouse-ear cress).